The primary structure comprises 1188 residues: Probable phosphoenolpyruvate synthase (1188 aa).

The 135-residue stretch at 536–670 folds into the DOD-type homing endonuclease domain; sequence LGGAVLSDGH…LIVGLYRLGI (135 aa). H824 (tele-phosphohistidine intermediate) is an active-site residue. Positions 917, 964, 1061, 1083, 1084, 1085, and 1086 each coordinate substrate. E1061 contacts Mg(2+). D1086 contacts Mg(2+). C1133 functions as the Proton donor in the catalytic mechanism.

This sequence belongs to the PEP-utilizing enzyme family. The cofactor is Mg(2+). Post-translationally, this protein undergoes a protein self splicing that involves a post-translational excision of the intervening region (intein) followed by peptide ligation.

The enzyme catalyses pyruvate + ATP + H2O = phosphoenolpyruvate + AMP + phosphate + 2 H(+). It functions in the pathway carbohydrate biosynthesis; gluconeogenesis. Functionally, catalyzes the phosphorylation of pyruvate to phosphoenolpyruvate. The sequence is that of Probable phosphoenolpyruvate synthase (ppsA) from Methanocaldococcus jannaschii (strain ATCC 43067 / DSM 2661 / JAL-1 / JCM 10045 / NBRC 100440) (Methanococcus jannaschii).